The following is a 286-amino-acid chain: Toxin zeta (286 aa).

Residue 39–46 (GQPGSGKT) participates in ATP binding. The segment at 249 to 286 (MVQNQHQETPEFKAIQQKMESLQPPTPPIPKTPKLPGI) is disordered. The span at 272-286 (PPTPPIPKTPKLPGI) shows a compositional bias: pro residues.

Belongs to the zeta toxin family. As to quaternary structure, in the presence of the epsilon antitoxin, forms an inactive PezA(2)PezT(2) heterotetramer.

It carries out the reaction UDP-N-acetyl-alpha-D-glucosamine + ATP = UDP-N-acetyl-alpha-D-glucosamine 3'-phosphate + ADP + H(+). Toxic component of a type II toxin-antitoxin (TA) system. Phosphorylates UDP-N-acetyl-D-glucosamine (UNAG) on the 3'-hydroxyl group of the N-acetyl-D-glucosamine moiety, yielding UNAG-3P. UNAG-3P inhibits MurA, the first committed step in cell wall synthesis, which is then blocked. Phosphorylation is inhibited by cognate epsilon antitoxin. Part of a postsegregational killing (PSK) system involved in the killing of plasmid-free cells. The zeta toxin induces programmed cell death. In Enterococcus hirae, this protein is Toxin zeta.